The chain runs to 202 residues: Helix-loop-helix protein 10 (202 aa).

Disordered regions lie at residues 1–26 (MESSSMTTHQEEPLDLSTGNHGNSEL) and 83–112 (QNKSEVNDENESTPSPTQNSRRRTSTGKID). The segment covering 17–26 (STGNHGNSEL) has biased composition (polar residues). A basic motif region spans residues 121–134 (TRRYEANARERNRV). Positions 121–172 (TRRYEANARERNRVQQLSKMFDQLRVCLPIEDDAKISKLATLKVASSYIGYL) constitute a bHLH domain. The tract at residues 135–172 (QQLSKMFDQLRVCLPIEDDAKISKLATLKVASSYIGYL) is helix-loop-helix motif.

In terms of assembly, heterodimer with hlh-2. As to expression, expressed in intestine, neurons in head, body and tail, and in body hypodermis, and vulva. Expressed in neurons in the male-specific genital sensilla (simple sense organs) known as rays.

It is found in the nucleus. Its subcellular location is the cytoplasm. Probable transcription factor which binds the E box motif 5'-CA[TC][AG]TG-3'. This Caenorhabditis elegans protein is Helix-loop-helix protein 10.